The chain runs to 88 residues: MIKNSFISFQEKKEENRGSVEFQVLSFTNKIRRLTSHLELHRKDFLSQRGLRKILGKRQRLLAYLSKKNRVRYKELINQLNIRELKTR.

The protein belongs to the universal ribosomal protein uS15 family. As to quaternary structure, part of the 30S ribosomal subunit.

It localises to the plastid. The protein resides in the chloroplast. This Draba nemorosa (Woodland whitlowgrass) protein is Small ribosomal subunit protein uS15c (rps15).